We begin with the raw amino-acid sequence, 236 residues long: Dolichol-phosphate mannosyltransferase (236 aa).

The GDP-alpha-D-mannose site is built by P9, Y11, E13, I40, D42, D95, A96, D97, R124, V160, R211, and K217. Mg(2+) is bound at residue D97. Position 97 (D97) interacts with Mn(2+).

This sequence belongs to the glycosyltransferase 2 family. In terms of assembly, component of the dolichol-phosphate mannose (DPM) synthase complex composed of dpm1, dpm2 and dpm3. Mg(2+) is required as a cofactor. Mn(2+) serves as cofactor. Requires Ca(2+) as cofactor.

It localises to the endoplasmic reticulum. It catalyses the reaction a di-trans,poly-cis-dolichyl phosphate + GDP-alpha-D-mannose = a di-trans,poly-cis-dolichyl beta-D-mannosyl phosphate + GDP. It participates in protein modification; protein glycosylation. Its function is as follows. Transfers mannose from GDP-mannose to dolichol monophosphate to form dolichol phosphate mannose (Dol-P-Man) which is the mannosyl donor in pathways leading to N-glycosylation, glycosyl phosphatidylinositol membrane anchoring, and O-mannosylation of proteins. This Schizosaccharomyces pombe (strain 972 / ATCC 24843) (Fission yeast) protein is Dolichol-phosphate mannosyltransferase.